The chain runs to 316 residues: Prenytransferase adrG (316 aa).

The next 7 helical transmembrane spans lie at 36 to 56, 60 to 80, 131 to 151, 163 to 183, 191 to 211, 247 to 267, and 294 to 314; these read LLGF…CASI, KIPI…SIFL, VLIY…FFAL, PQIT…SLGL, PTVC…VIYS, GFLA…VVSV, and KSAF…EYCL.

This sequence belongs to the UbiA prenyltransferase family. It depends on Mg(2+) as a cofactor.

Its subcellular location is the membrane. It carries out the reaction 3,5-dimethylorsellinate + (2E,6E)-farnesyl diphosphate = (3R)-3-farnesyl-6-hydroxy-2,3,5-trimethyl-4-oxocyclohexa-1,5-diene-1-carboxylate + diphosphate + H(+). Its pathway is secondary metabolite biosynthesis; terpenoid biosynthesis. In terms of biological role, prenytransferase; part of the gene cluster that mediates the biosynthesis of andrastins, meroterpenoid compounds that exhibit inhibitory activity against ras farnesyltransferase, suggesting that they could be promising leads for antitumor agents. The first step of the pathway is the synthesis of 3,5-dimethylorsellinic acid (DMOA) by the polyketide synthase adrD via condensation of one acetyl-CoA starter unit with 3 malonyl-CoA units and 2 methylations. DMAO is then converted to farnesyl-DMAO by the prenyltransferase adrG. The methyltransferase adrK catalyzes the methylation of the carboxyl group of farnesyl-DMAO to farnesyl-DMAO methyl ester which is further converted to epoxyfarnesyl-DMAO methyl ester by the FAD-dependent monooxygenase adrH. The terpene cyclase adrI then catalyzes the carbon skeletal rearrangement to generate the andrastin E, the first compound in the pathway having the andrastin scaffold, with the tetracyclic ring system. The post-cyclization tailoring enzymes adrF, adrE, adrJ, and adrA, are involved in the conversion of andrastin E into andrastin A. The short chain dehydrogenase adrF is responsible for the oxidation of the C-3 a hydroxyl group of andrastin E to yield the corresponding ketone, andrastin D. The ketoreductase adrE stereoselectively reduces the carbonyl moiety to reverse the stereochemistry of the C-3 position to yield andrastin F. The acetyltransferase adrJ is the acetyltransferase that attaches the acetyl group to the C-3 hydroxyl group of andrastin F to yield andrastin C. Finally, the cytochrome P450 monooxygenase adrA catalyzes two sequential oxidation reactions of the C-23 methyl group, to generate the corresponding alcohol andrastin B, and aldehyde andrastin A. This chain is Prenytransferase adrG, found in Penicillium roqueforti.